A 273-amino-acid chain; its full sequence is Manganese catalase (273 aa).

Position 35 (glutamate 35) interacts with Mn(2+). Ca(2+) is bound by residues aspartate 57 and aspartate 61. Residues glutamate 66, histidine 69, glutamate 149, and histidine 182 each contribute to the Mn(2+) site. Positions 220, 222, and 224 each coordinate Ca(2+). Positions 254–273 (EKPELKPAPPFVHNTLPGRE) are disordered.

Belongs to the manganese catalase family. Requires Ca(2+) as cofactor. The cofactor is Mn(2+).

It carries out the reaction 2 H2O2 = O2 + 2 H2O. Catalyzes the decomposition of hydrogen peroxide into water and oxygen. This is Manganese catalase (ydbD) from Bacillus subtilis (strain 168).